The primary structure comprises 632 residues: Cyclic GMP-AMP synthase-like receptor 2 (632 aa).

Mg(2+)-binding residues include D71, D73, and D181. D295 provides a ligand contact to Mn(2+).

The protein belongs to the mab-21 family. It depends on Mg(2+) as a cofactor. Mn(2+) serves as cofactor.

In terms of biological role, nucleotidyltransferase that catalyzes the formation of some cyclic nucleotide and plays a key role in innate immunity. Directly binds some unknown ligand, activating the nucleotidyltransferase activity, leading to synthesis of a second messenger that binds to and activates Sting, thereby triggering the immune response via activation of the NF-kappa-B transcription factor. The polypeptide is Cyclic GMP-AMP synthase-like receptor 2 (Crassostrea virginica (Eastern oyster)).